A 432-amino-acid chain; its full sequence is MSQYMMVAVAAVVAVAGSSQISRRSTGGTQEQEILNELLSNYDMRVRPPPSNYSDPMGPVTVRVNIMIRMLSKIDVVNMEYSMQLTFREQWLDSRLAYAHLGYHNPPKFLTVPHIKSNLWIPDTFFPTEKAAHRHLIDTDNMFLRIHPDGKVLYSSRISITSSCHMQLQLYPLDLQFCDFDLVSYAHTMKDIVYEWDPLAPVQLKPGVGSDLPNFQLTNITTNDDCTSHTNTGSYACLRMQLTLKRQFSYYLVQLYGPTTMIVIVSWVSFWIDMHSTAGRVALGVTTLLTMTTMQAAINAKLPPVSYVKVVDVWLGACQTFVFGALLEYAFVSYQDSQRQTEQAKSRAARKAQKRRAKMELVEREQYQPPCTCHLYQDYEPSFRDRLRRYFTKPDYLPAKIDYYARFCVPLGFLAFNAIYWTSCLVMVSRLV.

Positions 1–18 (MSQYMMVAVAAVVAVAGS) are cleaved as a signal peptide. Over 19 to 249 (SQISRRSTGG…MQLTLKRQFS (231 aa)) the chain is Extracellular. N-linked (GlcNAc...) asparagine glycosylation occurs at Asn52. L-glutamate-binding residues include Arg69, Arg88, and Ser155. Cys164 and Cys178 are oxidised to a cystine. Position 184 (Ser184) interacts with L-glutamate. Asn219 carries an N-linked (GlcNAc...) asparagine glycan. Cys226 and Cys237 are disulfide-bonded. Residues 250–272 (YYLVQLYGPTTMIVIVSWVSFWI) traverse the membrane as a helical segment. Residues 273-277 (DMHST) are Cytoplasmic-facing. A helical membrane pass occupies residues 278-299 (AGRVALGVTTLLTMTTMQAAIN). Over 300-306 (AKLPPVS) the chain is Extracellular. A helical transmembrane segment spans residues 307–327 (YVKVVDVWLGACQTFVFGALL). The Cytoplasmic segment spans residues 328–402 (EYAFVSYQDS…KPDYLPAKID (75 aa)). The helical transmembrane segment at 403–426 (YYARFCVPLGFLAFNAIYWTSCLV) threads the bilayer. Topologically, residues 427–432 (MVSRLV) are extracellular.

It belongs to the ligand-gated ion channel (TC 1.A.9) family. Glutamate-gated chloride channel (TC 1.A.9.4) subfamily. As to quaternary structure, pentamer. As to expression, expressed in motor neuron commissures at the anterior portion of the worms.

Its subcellular location is the postsynaptic cell membrane. The protein resides in the cell membrane. Its function is as follows. Glutamate-gated chloride channel subunit; channel properties may be modulated by the formation of heteromeric channels. Glutamate binding triggers a rapidly reversible current, while the anti-helmintic drug ivermectin triggers a permanently open channel configuration. This is Glutamate-gated chloride channel subunit beta from Haemonchus contortus (Barber pole worm).